Reading from the N-terminus, the 1227-residue chain is DNA-directed RNA polymerase subunit beta (1227 aa).

It belongs to the RNA polymerase beta chain family. In terms of assembly, the RNAP catalytic core consists of 2 alpha, 1 beta, 1 beta' and 1 omega subunit. When a sigma factor is associated with the core the holoenzyme is formed, which can initiate transcription.

It carries out the reaction RNA(n) + a ribonucleoside 5'-triphosphate = RNA(n+1) + diphosphate. Functionally, DNA-dependent RNA polymerase catalyzes the transcription of DNA into RNA using the four ribonucleoside triphosphates as substrates. This is DNA-directed RNA polymerase subunit beta from Chloroflexus aurantiacus (strain ATCC 29366 / DSM 635 / J-10-fl).